Reading from the N-terminus, the 493-residue chain is Trans-aconitate decarboxylase 1 (493 aa).

The interval 1-22 (MAPALNANPTTKRDELSAPSAS) is disordered.

Belongs to the class-II fumarase/aspartase family.

The protein resides in the cytoplasm. It localises to the cytosol. It is found in the nucleus. The catalysed reaction is trans-aconitate + H(+) = itaconate + CO2. The protein operates within secondary metabolite biosynthesis. In terms of biological role, trans-aconitate decarboxylase; part of the gene cluster that mediates the biosynthesis of itaconic acid and 2-hydroxyparaconate. Cis-aconitate is secreted by the mitochondrial tricarboxylate transporter MTT1. In the cytosol cis-aconitate is converted into trans-aconitate via isomerization by the aconitate-delta-isomerase ADI1. Decarboxylation of trans-aconitate by the trans-aconitate decarboxylase TAD1 then leads then to the production of itaconic acid. The cytochrome P450 monooxygenase CYP3 further converts itaconate to 2-hydroxyparaconate via oxidation of the double bond, leading to a transient epoxide, which can subsequently be lactonized to produce 2-hydroxyparaconate. Secretion of itaconate and possibly 2-hydroxyparaconate into the medium is mediated by the major facilitator ITP1. The glyoxalase domain-containing protein RDO1 is not involved in the biosynthesis of itaconate and 2-hydroxyparaconate, however, it might play a role in the further conversion of 2-hydroxyparaconate to itatartarate. This chain is Trans-aconitate decarboxylase 1, found in Mycosarcoma maydis (Corn smut fungus).